A 330-amino-acid polypeptide reads, in one-letter code: Phosphate acyltransferase (330 aa).

This sequence belongs to the PlsX family. As to quaternary structure, homodimer. Probably interacts with PlsY.

The protein localises to the cytoplasm. The catalysed reaction is a fatty acyl-[ACP] + phosphate = an acyl phosphate + holo-[ACP]. The protein operates within lipid metabolism; phospholipid metabolism. Its function is as follows. Catalyzes the reversible formation of acyl-phosphate (acyl-PO(4)) from acyl-[acyl-carrier-protein] (acyl-ACP). This enzyme utilizes acyl-ACP as fatty acyl donor, but not acyl-CoA. This Teredinibacter turnerae (strain ATCC 39867 / T7901) protein is Phosphate acyltransferase.